Here is a 154-residue protein sequence, read N- to C-terminus: Large ribosomal subunit protein uL23 (154 aa).

The protein belongs to the universal ribosomal protein uL23 family.

This protein binds to a specific region on the 26S rRNA. The protein is Large ribosomal subunit protein uL23 (RPL23A) of Daucus carota (Wild carrot).